A 203-amino-acid polypeptide reads, in one-letter code: Ras-related protein RABG3b (203 aa).

15–22 (GDSGVGKT) is a binding site for GTP. Residues 37–45 (YKATIGADF) carry the Effector region motif. Residues 63-67 (DTAGQ), 125-128 (NKVD), and 158-159 (SA) each bind GTP. Residues C201 and C203 are each lipidated (S-geranylgeranyl cysteine). C203 carries the post-translational modification Cysteine methyl ester.

It belongs to the small GTPase superfamily. Rab family. Interacts with VPS39. In terms of tissue distribution, expressed in xylem cells of inflorescence stems.

The protein resides in the cell membrane. Functionally, intracellular vesicle trafficking and protein transport. Functions in autophagy. Involved in xylem and tracheary element differentiation. The protein is Ras-related protein RABG3b (RABG3B) of Arabidopsis thaliana (Mouse-ear cress).